The chain runs to 539 residues: Serine/threonine-protein kinase BUR1 (539 aa).

The span at 1 to 15 (MEKLSETTPNGTSPR) shows a compositional bias: polar residues. Residues 1–27 (MEKLSETTPNGTSPRTFALNHSRPRSS) are disordered. The Protein kinase domain maps to 37-339 (YELLGKLGEG…AVDALQHPWF (303 aa)). ATP is bound by residues 43–51 (LGEGTFGEV) and Lys-66. Residue Asp-169 is the Proton acceptor of the active site. A disordered region spans residues 370–539 (AALPPAPKGG…DRPDHNGYRR (170 aa)). Composition is skewed to basic and acidic residues over residues 414–428 (NGPD…RERG), 471–514 (NRDD…DRGT), and 521–539 (PRHD…GYRR).

Belongs to the protein kinase superfamily. CMGC Ser/Thr protein kinase family. CDC2/CDKX subfamily.

The protein resides in the nucleus. The enzyme catalyses L-seryl-[protein] + ATP = O-phospho-L-seryl-[protein] + ADP + H(+). It carries out the reaction L-threonyl-[protein] + ATP = O-phospho-L-threonyl-[protein] + ADP + H(+). It catalyses the reaction [DNA-directed RNA polymerase] + ATP = phospho-[DNA-directed RNA polymerase] + ADP + H(+). Its function is as follows. Serine/threonine-protein kinase involved in transcription regulation. Phosphorylates the UBC2/RAD6 ubiquitin-conjugating enzyme (E2), leading to monoubiquitination of histone H2B and the silencing of telomeric-associated genes. Also required for histone H3 methylation. Necessary for the recovery from pheromone-induced growth arrest in the cell cycle G1 phase. This Gibberella zeae (strain ATCC MYA-4620 / CBS 123657 / FGSC 9075 / NRRL 31084 / PH-1) (Wheat head blight fungus) protein is Serine/threonine-protein kinase BUR1 (BUR1).